The sequence spans 133 residues: MADFEGGGDDGGYEEFDEGGGFEEEYVEETETTEAYTDIIDPSADANTAEAGRIPNHLRKTTRYMTKYERARLLGSRALQISMNAPIMVELEGETDPLQIAWKELRAKKIPLIIRRFLPNGMYEDWSVDELSI.

Over residues 1-32 (MADFEGGGDDGGYEEFDEGGGFEEEYVEETET) the composition is skewed to acidic residues. The tract at residues 1-55 (MADFEGGGDDGGYEEFDEGGGFEEEYVEETETTEAYTDIIDPSADANTAEAGRIP) is disordered.

Belongs to the archaeal Rpo6/eukaryotic RPB6 RNA polymerase subunit family. Component of the RNA polymerase I (Pol I), RNA polymerase II (Pol II) and RNA polymerase III (Pol III) complexes consisting of at least 13, 12 and 17 subunits, respectively.

The protein localises to the nucleus. In terms of biological role, DNA-dependent RNA polymerases catalyze the transcription of DNA into RNA using the four ribonucleoside triphosphates as substrates. Common component of RNA polymerases I, II and III which synthesize ribosomal RNA precursors, mRNA precursors and many functional non-coding RNAs, and small RNAs, such as 5S rRNA and tRNAs, respectively. Pol II is the central component of the basal RNA polymerase II transcription machinery. Pols are composed of mobile elements that move relative to each other. In Pol II, RPB6 is part of the clamp element and together with parts of RPB1 and RPB2 forms a pocket to which the RPB4-RPB7 subcomplex binds. The sequence is that of DNA-directed RNA polymerases I, II, and III subunit rpabc2 (polr2f) from Dictyostelium discoideum (Social amoeba).